The chain runs to 693 residues: MAREFSLEKTRNIGIMAHVDAGKTTTTERILYYTGKIHKIGETHEGASQMDWMEQEQERGITITSAATTAQWKDHRVNIIDTPGHVDFTIEVQRSLRVLDGAVTVLDAQSGVEPQTETVWRQATEYGVPRIVFANKMDKIGADFLYSVSTLHDRLQANAHPIQLPIGAEDDFEGIIDLVTMKAEIYTNDLGTDILIEDIPADYLDQAKEYREKLIEAVAETDEDLMMKYLEGEEITETELKAAIRKATINVEFFPVLAGSAFKNKGVQMMLDAVVDYLPSPLDIPPIKGVNPDTDEEEERPASDDEPFAALAFKIMTDPFVGRLTFFRVYSGILNSGSYVLNTSKGKRERIGRILQMHANSRQEIETVYAGDIAAAVGLKETTTGDSLTDEKAKVILESIEVPEPVIQLMVEPKSKADQDKMGIALQKLAEEDPTFRVETNVETGETVISGMGELHLDVLVDRMKREFKVEANVGAPQVSYRETFRQATQARGFFKRQSGGKGQFGDVWIEFTPNEEGKGFEFENAIVGGVVPREFVPAVEKGLIESMANGVLAGYPIVDVKAKLYDGSYHDVDSSETAFKIAASLALKEAAKTAKPVILEPMMLVTITVPEENLGDVMGHVTARRGRVDGMEAHGNSQIVRAFVPLAEMFGYATVLRSASQGRGTFMMVFDHYEDVPKSVQEEIIKKNAGEA.

A tr-type G domain is found at 8–282; it reads EKTRNIGIMA…AVVDYLPSPL (275 aa). Residues 17-24, 81-85, and 135-138 contribute to the GTP site; these read AHVDAGKT, DTPGH, and NKMD.

Belongs to the TRAFAC class translation factor GTPase superfamily. Classic translation factor GTPase family. EF-G/EF-2 subfamily.

The protein localises to the cytoplasm. In terms of biological role, catalyzes the GTP-dependent ribosomal translocation step during translation elongation. During this step, the ribosome changes from the pre-translocational (PRE) to the post-translocational (POST) state as the newly formed A-site-bound peptidyl-tRNA and P-site-bound deacylated tRNA move to the P and E sites, respectively. Catalyzes the coordinated movement of the two tRNA molecules, the mRNA and conformational changes in the ribosome. This Streptococcus mutans serotype c (strain ATCC 700610 / UA159) protein is Elongation factor G.